A 210-amino-acid chain; its full sequence is Nta operon transcriptional regulator (210 aa).

The 55-residue stretch at 1–55 folds into the HTH gntR-type domain; that stretch reads MAVSYHFRPGERINEVELAAQLKVSRTPLREALNRLTTEGFLTTTANKGFFARVL. Positions 15–34 form a DNA-binding region, H-T-H motif; the sequence is EVELAAQLKVSRTPLREALN.

Probable regulator for the expression of the NTA monooxygenase subunits. The polypeptide is Nta operon transcriptional regulator (ntaR) (Aminobacter aminovorans (Chelatobacter heintzii)).